The chain runs to 259 residues: Glutamate 5-kinase (259 aa).

K18 contacts ATP. S54, D141, and N153 together coordinate substrate. Position 173–174 (173–174 (SD)) interacts with ATP.

The protein belongs to the glutamate 5-kinase family.

Its subcellular location is the cytoplasm. The enzyme catalyses L-glutamate + ATP = L-glutamyl 5-phosphate + ADP. It participates in amino-acid biosynthesis; L-proline biosynthesis; L-glutamate 5-semialdehyde from L-glutamate: step 1/2. In terms of biological role, catalyzes the transfer of a phosphate group to glutamate to form L-glutamate 5-phosphate. The chain is Glutamate 5-kinase from Clavibacter michiganensis subsp. michiganensis (strain NCPPB 382).